The sequence spans 243 residues: Small ribosomal subunit protein uS2 (243 aa).

Belongs to the universal ribosomal protein uS2 family.

This Chromobacterium violaceum (strain ATCC 12472 / DSM 30191 / JCM 1249 / CCUG 213 / NBRC 12614 / NCIMB 9131 / NCTC 9757 / MK) protein is Small ribosomal subunit protein uS2.